We begin with the raw amino-acid sequence, 240 residues long: PF03932 family protein CutC (240 aa).

It belongs to the CutC family.

Its subcellular location is the cytoplasm. The protein is PF03932 family protein CutC of Xanthomonas axonopodis pv. citri (strain 306).